Reading from the N-terminus, the 119-residue chain is DNA-binding protein MMP0157 (119 aa).

Residues 1–12 (MNPEEIRQRRLQ) show a composition bias toward basic and acidic residues. Residues 1 to 35 (MNPEEIRQRRLQEMQAKAQAQGAANDPEAQRQMQE) form a disordered region.

It belongs to the PDCD5 family.

This chain is DNA-binding protein MMP0157, found in Methanococcus maripaludis (strain DSM 14266 / JCM 13030 / NBRC 101832 / S2 / LL).